The primary structure comprises 238 residues: Ribonuclease PH (238 aa).

Phosphate is bound by residues Arg86 and 124–126 (GTR).

It belongs to the RNase PH family. As to quaternary structure, homohexameric ring arranged as a trimer of dimers.

It carries out the reaction tRNA(n+1) + phosphate = tRNA(n) + a ribonucleoside 5'-diphosphate. Functionally, phosphorolytic 3'-5' exoribonuclease that plays an important role in tRNA 3'-end maturation. Removes nucleotide residues following the 3'-CCA terminus of tRNAs; can also add nucleotides to the ends of RNA molecules by using nucleoside diphosphates as substrates, but this may not be physiologically important. Probably plays a role in initiation of 16S rRNA degradation (leading to ribosome degradation) during starvation. This chain is Ribonuclease PH, found in Rhizobium rhizogenes (strain K84 / ATCC BAA-868) (Agrobacterium radiobacter).